The chain runs to 282 residues: Bifunctional protein FolD 2 (282 aa).

Residues 165–167 and Ser190 each bind NADP(+); that span reads GRS.

It belongs to the tetrahydrofolate dehydrogenase/cyclohydrolase family. Homodimer.

The catalysed reaction is (6R)-5,10-methylene-5,6,7,8-tetrahydrofolate + NADP(+) = (6R)-5,10-methenyltetrahydrofolate + NADPH. The enzyme catalyses (6R)-5,10-methenyltetrahydrofolate + H2O = (6R)-10-formyltetrahydrofolate + H(+). It participates in one-carbon metabolism; tetrahydrofolate interconversion. Catalyzes the oxidation of 5,10-methylenetetrahydrofolate to 5,10-methenyltetrahydrofolate and then the hydrolysis of 5,10-methenyltetrahydrofolate to 10-formyltetrahydrofolate. This chain is Bifunctional protein FolD 2, found in Acinetobacter baylyi (strain ATCC 33305 / BD413 / ADP1).